Reading from the N-terminus, the 263-residue chain is Undecaprenyl-diphosphatase (263 aa).

A run of 8 helical transmembrane segments spans residues 1 to 21 (MSYL…FLPI), 41 to 61 (FTKA…LVLY), 69 to 89 (WGFY…GFVV), 96 to 116 (LMGS…ILIW), 147 to 167 (AIAM…GLTL), 177 to 197 (FSFF…LLKI), 208 to 228 (LLLV…KFFI), and 238 to 258 (GFGY…YTGH).

Belongs to the UppP family.

The protein localises to the cell inner membrane. The catalysed reaction is di-trans,octa-cis-undecaprenyl diphosphate + H2O = di-trans,octa-cis-undecaprenyl phosphate + phosphate + H(+). In terms of biological role, catalyzes the dephosphorylation of undecaprenyl diphosphate (UPP). Confers resistance to bacitracin. The sequence is that of Undecaprenyl-diphosphatase from Bdellovibrio bacteriovorus (strain ATCC 15356 / DSM 50701 / NCIMB 9529 / HD100).